A 251-amino-acid polypeptide reads, in one-letter code: Imidazole glycerol phosphate synthase subunit HisF (251 aa).

Residues D11 and D130 contribute to the active site.

The protein belongs to the HisA/HisF family. In terms of assembly, heterodimer of HisH and HisF.

The protein localises to the cytoplasm. It catalyses the reaction 5-[(5-phospho-1-deoxy-D-ribulos-1-ylimino)methylamino]-1-(5-phospho-beta-D-ribosyl)imidazole-4-carboxamide + L-glutamine = D-erythro-1-(imidazol-4-yl)glycerol 3-phosphate + 5-amino-1-(5-phospho-beta-D-ribosyl)imidazole-4-carboxamide + L-glutamate + H(+). The protein operates within amino-acid biosynthesis; L-histidine biosynthesis; L-histidine from 5-phospho-alpha-D-ribose 1-diphosphate: step 5/9. Functionally, IGPS catalyzes the conversion of PRFAR and glutamine to IGP, AICAR and glutamate. The HisF subunit catalyzes the cyclization activity that produces IGP and AICAR from PRFAR using the ammonia provided by the HisH subunit. The chain is Imidazole glycerol phosphate synthase subunit HisF from Chlorobium phaeobacteroides (strain BS1).